The following is a 491-amino-acid chain: Ketol-acid reductoisomerase (NADP(+)) (491 aa).

Positions A15–S208 constitute a KARI N-terminal Rossmann domain. NADP(+) contacts are provided by residues C45–Q48, R68, R76, S78, and D108–Q110. H132 is a catalytic residue. An NADP(+)-binding site is contributed by G158. 2 KARI C-terminal knotted domains span residues S209 to Q344 and F345 to M484. Mg(2+) is bound by residues D217, E221, E389, and E393. Residue S414 participates in substrate binding.

This sequence belongs to the ketol-acid reductoisomerase family. Mg(2+) serves as cofactor.

It carries out the reaction (2R)-2,3-dihydroxy-3-methylbutanoate + NADP(+) = (2S)-2-acetolactate + NADPH + H(+). The catalysed reaction is (2R,3R)-2,3-dihydroxy-3-methylpentanoate + NADP(+) = (S)-2-ethyl-2-hydroxy-3-oxobutanoate + NADPH + H(+). Its pathway is amino-acid biosynthesis; L-isoleucine biosynthesis; L-isoleucine from 2-oxobutanoate: step 2/4. It participates in amino-acid biosynthesis; L-valine biosynthesis; L-valine from pyruvate: step 2/4. Its function is as follows. Involved in the biosynthesis of branched-chain amino acids (BCAA). Catalyzes an alkyl-migration followed by a ketol-acid reduction of (S)-2-acetolactate (S2AL) to yield (R)-2,3-dihydroxy-isovalerate. In the isomerase reaction, S2AL is rearranged via a Mg-dependent methyl migration to produce 3-hydroxy-3-methyl-2-ketobutyrate (HMKB). In the reductase reaction, this 2-ketoacid undergoes a metal-dependent reduction by NADPH to yield (R)-2,3-dihydroxy-isovalerate. In Enterobacter sp. (strain 638), this protein is Ketol-acid reductoisomerase (NADP(+)).